Here is a 262-residue protein sequence, read N- to C-terminus: Ribose-5-phosphate isomerase A (262 aa).

Residues 33-36, 89-92, and 102-105 contribute to the substrate site; these read TGST, DGAD, and KGGG. The Proton acceptor role is filled by Glu-111. Lys-129 provides a ligand contact to substrate.

It belongs to the ribose 5-phosphate isomerase family. As to quaternary structure, homodimer.

The catalysed reaction is aldehydo-D-ribose 5-phosphate = D-ribulose 5-phosphate. It functions in the pathway carbohydrate degradation; pentose phosphate pathway; D-ribose 5-phosphate from D-ribulose 5-phosphate (non-oxidative stage): step 1/1. Catalyzes the reversible conversion of ribose-5-phosphate to ribulose 5-phosphate. The sequence is that of Ribose-5-phosphate isomerase A from Ruegeria sp. (strain TM1040) (Silicibacter sp.).